Consider the following 2488-residue polypeptide: PKS-NRPS hybrid synthetase swnK (2488 aa).

Residues 33–422 (FEQVADRFPD…GRIDGVVKIR (390 aa)) form an adenylation (A) domain region. The Carrier 1 domain occupies 523–598 (QPTSELEQRI…ALAAYLAGTG (76 aa)). S558 carries the O-(pantetheine 4'-phosphoryl)serine modification. In terms of domain architecture, Ketosynthase family 3 (KS3) spans 616–1039 (HEDIAIVSMA…GTNAHVIVEE (424 aa)). Active-site for beta-ketoacyl synthase activity residues include C785, H920, and H960. The tract at residues 1149 to 1471 (LFTGQGSQLP…SLSELHVRHV (323 aa)) is malonyl-CoA:ACP transacylase (MAT) domain. The tract at residues 1723–1901 (GAVLVTGGLG…ASSVAYGTWA (179 aa)) is ketoreductase (KR) domain. The Carrier 2 domain occupies 2002–2077 (SIVLHMVQAT…SLSEFLLCRL (76 aa)). O-(pantetheine 4'-phosphoryl)serine is present on S2037. Positions 2084 to 2103 (STSSPSDTDGATPSTPTSAA) are disordered. The thioester reductase (TE) domain stretch occupies residues 2136–2364 (VTGATGFVGT…VLPVDYLCGT (229 aa)).

This sequence in the N-terminal section; belongs to the NRP synthetase family.

The catalysed reaction is L-pipecolate + malonyl-CoA + 2 NADPH + 4 H(+) = (8aS)-octahydroindolizin-1-one + CO2 + 2 NADP(+) + CoA + 2 H2O. The enzyme catalyses L-pipecolate + malonyl-CoA + 3 NADPH + 5 H(+) = (1R,8aS)-octahydroindolizin-1-ol + CO2 + 3 NADP(+) + CoA + 2 H2O. It catalyses the reaction L-pipecolate + malonyl-CoA + 3 NADPH + 5 H(+) = (1S,8aS)-octahydroindolizin-1-ol + CO2 + 3 NADP(+) + CoA + 2 H2O. Its pathway is mycotoxin biosynthesis. PKS-NRPS hybrid synthetase; part of the gene cluster that mediates the biosynthesis of swainsonine (SW), a cytotoxic fungal alkaloid and a potential cancer therapy drug. Swainsonine production occurs via a multibranched pathway and is dispensable for fungal colonization of plants and infection of insect hosts. The first step of swainsonine biosynthesis is the production of the precursor pipecolic acid (PA) via conversion of L-lysine (Lys) to 1-piperideine-6-carboxylate (P6C) by the aminotransferase swnA, the latter being further reduced to PA by the reductase swnR. PA can be converted from lysine by both the SW biosynthetic cluster and the unclustered genes such as lysine cyclodeaminase. The PKS-NRPS hybrid synthetase swnK uptakes and condensates PA and malonyl-CoA with and without skipping of the ketoreductase (KR) domain in order to produce 3 intermediates, 1-oxoindolizidine, (1S)-1-hydroxyindolizin, and (1R)-1-hydroxyindolizine; with the transisomer (1S)-1-hydroxyindolizin being predominant. The terminal thioester reductase (TE) domain of swnK is involved in reduction of the thioester bond to release the intermediate aldehydes. The oxidoreductase swnN could contribute to the reduction of 1-oxoindolizidine to (1S)-1-hydroxyindolizin and (1R)-1-hydroxyindolizine, contributing to the major route of SW production. The dioxygenase swnH2 would be responsible for the oxidization of (1R)-1-hydroxyindolizine into (1R,2S)-1,2-dihydroxyindolizine and of (1S)-1-hydroxyindolizin to yield both (1R,2S)-1,2-dihydroxyindolizine and (1S,2S)-1,2-dihydroxyindolizine. The dioxygenase swnH1 then performs the conversion of the 1,2-dihydroxyindolizine epimers to SW. In Metarhizium robertsii (strain ARSEF 23 / ATCC MYA-3075) (Metarhizium anisopliae (strain ARSEF 23)), this protein is PKS-NRPS hybrid synthetase swnK.